We begin with the raw amino-acid sequence, 775 residues long: Glutamine--tRNA ligase (775 aa).

Residue alanine 2 is modified to N-acetylalanine. Serine 70 is subject to Phosphoserine. The short motif at proline 270–histidine 280 is the 'HIGH' region element. ATP is bound by residues glutamate 271–asparagine 273 and histidine 277–alanine 283. Aspartate 303 serves as a coordination point for L-glutamine. Lysine 309 is subject to N6-acetyllysine. Tyrosine 438 serves as a coordination point for L-glutamine. ATP contacts are provided by residues threonine 457, arginine 486–leucine 487, and valine 494–lysine 496. Residues valine 493–arginine 497 carry the 'KMSKS' region motif. At serine 495 the chain carries Phosphoserine.

Belongs to the class-I aminoacyl-tRNA synthetase family. In terms of assembly, monomer. Part of a multisubunit complex that groups tRNA ligases for Arg (RARS1), Asp (DARS1), Gln (QARS1), Ile (IARS1), Leu (LARS1), Lys (KARS1), Met (MARS1) the bifunctional ligase for Glu and Pro (EPRS1) and the auxiliary subunits AIMP1/p43, AIMP2/p38 and EEF1E1/p18. Interacts with RARS1. Part of a complex composed of RARS1, QARS1 and AIMP1.

The protein resides in the cytoplasm. It localises to the cytosol. It carries out the reaction tRNA(Gln) + L-glutamine + ATP = L-glutaminyl-tRNA(Gln) + AMP + diphosphate. Functionally, glutamine--tRNA ligase. Plays a critical role in brain development. The chain is Glutamine--tRNA ligase (QARS1) from Bos taurus (Bovine).